Reading from the N-terminus, the 252-residue chain is 3-dehydroquinate dehydratase (252 aa).

Residues Ser-21, Glu-46–Arg-48, and Arg-82 each bind 3-dehydroquinate. His-143 (proton donor/acceptor) is an active-site residue. Catalysis depends on Lys-170, which acts as the Schiff-base intermediate with substrate. Residues Arg-213, Ser-232, and Gln-236 each coordinate 3-dehydroquinate.

This sequence belongs to the type-I 3-dehydroquinase family. In terms of assembly, homodimer.

The enzyme catalyses 3-dehydroquinate = 3-dehydroshikimate + H2O. It functions in the pathway metabolic intermediate biosynthesis; chorismate biosynthesis; chorismate from D-erythrose 4-phosphate and phosphoenolpyruvate: step 3/7. Involved in the third step of the chorismate pathway, which leads to the biosynthesis of aromatic amino acids. Catalyzes the cis-dehydration of 3-dehydroquinate (DHQ) and introduces the first double bond of the aromatic ring to yield 3-dehydroshikimate. In Escherichia coli O157:H7, this protein is 3-dehydroquinate dehydratase.